Here is a 346-residue protein sequence, read N- to C-terminus: Nitrilase 1 (346 aa).

An N-acetylserine modification is found at serine 2. The region spanning 25–297 is the CN hydrolase domain; that stretch reads VRVTIVQSST…EGLVTADIDL (273 aa). Glutamate 65 serves as the catalytic Proton acceptor. Lysine 152 (proton donor) is an active-site residue. Cysteine 186 (nucleophile) is an active-site residue.

It belongs to the carbon-nitrogen hydrolase superfamily. Nitrilase family. As to quaternary structure, interacts with DEK3. As to expression, expressed in cotyledons, hypocotyls, leaves, roots, stems, flowers and siliques.

The catalysed reaction is a nitrile + 2 H2O = a carboxylate + NH4(+). Functionally, can convert indole-3-acetonitrile to the plant hormone indole-3-acetic acid. This is Nitrilase 1 from Arabidopsis thaliana (Mouse-ear cress).